Reading from the N-terminus, the 440-residue chain is COP9 signalosome complex subunit 5 (440 aa).

One can recognise an MPN domain in the interval 71–218 (VLISKLSCEK…MGAFRTIESK (148 aa)). Residues His-164, His-166, and Asp-177 each coordinate Zn(2+). Residues 164-177 (HSHPGYDCWLSNID) carry the JAMM motif motif. Residues 319–341 (TQRGDSTETSSFGSMFSGDNTSD) are compositionally biased toward polar residues. 2 disordered regions span residues 319-343 (TQRGDSTETSSFGSMFSGDNTSDVD) and 376-400 (SRSTDNFHNSKKRMNSNQEKCHDEG).

The protein belongs to the peptidase M67A family. CSN5 subfamily. As to quaternary structure, component of a COP9 signalosome-like (CSN) complex, composed of at least RRI1/CSN5, CSN9, RRI2/CSN10, PCI8/CSN11, CSN12 and CSI1. Within this complex it probably interacts directly with CSN12. Also interacts with RPN5. The cofactor is a divalent metal cation.

The protein localises to the cytoplasm. It is found in the nucleus. Its function is as follows. Catalytic component of the COP9 signalosome (CSN) complex that acts as an regulator of the ubiquitin (Ubl) conjugation pathway by mediating the deneddylation of the cullin subunit of SCF-type E3 ubiquitin-protein ligase complexes. The CSN complex is involved in the regulation of the mating pheromone response. The chain is COP9 signalosome complex subunit 5 (RRI1) from Saccharomyces cerevisiae (strain YJM789) (Baker's yeast).